A 150-amino-acid chain; its full sequence is Truncated transcription factor CAULIFLOWER A (150 aa).

One can recognise an MADS-box domain in the interval Met1 to Ser61. One can recognise a K-box; partial domain in the interval Gln90–His150.

In terms of assembly, homodimer capable of binding to CArG-box sequences. Expressed in some of the meristems of arrest-stage cauliflower heads.

The protein localises to the nucleus. Functionally, probable transcription factor that promotes early floral meristem identity in synergy with APETALA1, FRUITFULL and LEAFY. Is required subsequently for the transition of an inflorescence meristem into a floral meristem. Seems to be partially redundant to the function of APETALA1. The polypeptide is Truncated transcription factor CAULIFLOWER A (CAL-A) (Brassica oleracea var. botrytis (Cauliflower)).